Reading from the N-terminus, the 62-residue chain is UPF0434 protein BP2767 (62 aa).

This sequence belongs to the UPF0434 family.

The protein is UPF0434 protein BP2767 of Bordetella pertussis (strain Tohama I / ATCC BAA-589 / NCTC 13251).